The chain runs to 734 residues: Photosystem I P700 chlorophyll a apoprotein A2 (734 aa).

Transmembrane regions (helical) follow at residues I46–A69, L135–Q158, L175–I199, I273–Y291, L330–Y353, A369–I395, A417–H439, and F517–V535. Positions 559 and 568 each coordinate [4Fe-4S] cluster. Transmembrane regions (helical) follow at residues A575–W596 and L643–I665. The chlorophyll a site is built by H654, M662, and Y670. W671 provides a ligand contact to phylloquinone. A helical transmembrane segment spans residues F707–A727.

This sequence belongs to the PsaA/PsaB family. In terms of assembly, the PsaA/B heterodimer binds the P700 chlorophyll special pair and subsequent electron acceptors. PSI consists of a core antenna complex that captures photons, and an electron transfer chain that converts photonic excitation into a charge separation. The eukaryotic PSI reaction center is composed of at least 11 subunits. The cofactor is P700 is a chlorophyll a/chlorophyll a' dimer, A0 is one or more chlorophyll a, A1 is one or both phylloquinones and FX is a shared 4Fe-4S iron-sulfur center..

The protein localises to the plastid membrane. The catalysed reaction is reduced [plastocyanin] + hnu + oxidized [2Fe-2S]-[ferredoxin] = oxidized [plastocyanin] + reduced [2Fe-2S]-[ferredoxin]. Its function is as follows. PsaA and PsaB bind P700, the primary electron donor of photosystem I (PSI), as well as the electron acceptors A0, A1 and FX. PSI is a plastocyanin-ferredoxin oxidoreductase, converting photonic excitation into a charge separation, which transfers an electron from the donor P700 chlorophyll pair to the spectroscopically characterized acceptors A0, A1, FX, FA and FB in turn. Oxidized P700 is reduced on the lumenal side of the thylakoid membrane by plastocyanin. The chain is Photosystem I P700 chlorophyll a apoprotein A2 from Cuscuta sandwichiana (Kauna'oa).